A 275-amino-acid chain; its full sequence is Large ribosomal subunit protein uL2c (275 aa).

Positions 224 to 263 are disordered; the sequence is VMNPVDHPHGGGEGRAPIGRKRPLTPWGRPALGKKSRKNH.

The protein belongs to the universal ribosomal protein uL2 family. In terms of assembly, part of the 50S ribosomal subunit.

Its subcellular location is the plastid. It localises to the chloroplast. This Chaetosphaeridium globosum (Charophycean green alga) protein is Large ribosomal subunit protein uL2c (rpl2).